The following is a 469-amino-acid chain: Exodeoxyribonuclease 7 large subunit (469 aa).

It belongs to the XseA family. In terms of assembly, heterooligomer composed of large and small subunits.

The protein localises to the cytoplasm. It carries out the reaction Exonucleolytic cleavage in either 5'- to 3'- or 3'- to 5'-direction to yield nucleoside 5'-phosphates.. Bidirectionally degrades single-stranded DNA into large acid-insoluble oligonucleotides, which are then degraded further into small acid-soluble oligonucleotides. The sequence is that of Exodeoxyribonuclease 7 large subunit from Mycoplasma mycoides subsp. mycoides SC (strain CCUG 32753 / NCTC 10114 / PG1).